A 161-amino-acid polypeptide reads, in one-letter code: Large ribosomal subunit protein uL15 (161 aa).

The interval 1–43 is disordered; it reads MKLSEISDNPGARKKRMRIGRGIGSGKGKTGGRGGKGQTARSG. A compositionally biased stretch (gly residues) spans 21-37; sequence RGIGSGKGKTGGRGGKG.

This sequence belongs to the universal ribosomal protein uL15 family. As to quaternary structure, part of the 50S ribosomal subunit.

Its function is as follows. Binds to the 23S rRNA. The sequence is that of Large ribosomal subunit protein uL15 from Rhodopseudomonas palustris (strain BisB5).